Here is a 310-residue protein sequence, read N- to C-terminus: ATP-dependent protease (310 aa).

The Integrase catalytic domain maps to R24–F186.

This Lactococcus lactis subsp. lactis (Streptococcus lactis) protein is ATP-dependent protease.